We begin with the raw amino-acid sequence, 421 residues long: UDP-N-acetylglucosamine 1-carboxyvinyltransferase (421 aa).

Residue 22-23 (KN) participates in phosphoenolpyruvate binding. Arginine 93 contributes to the UDP-N-acetyl-alpha-D-glucosamine binding site. Cysteine 117 (proton donor) is an active-site residue. 2-(S-cysteinyl)pyruvic acid O-phosphothioketal is present on cysteine 117. UDP-N-acetyl-alpha-D-glucosamine-binding positions include 122–126 (RPVDL), aspartate 308, and valine 330.

Belongs to the EPSP synthase family. MurA subfamily.

The protein localises to the cytoplasm. It catalyses the reaction phosphoenolpyruvate + UDP-N-acetyl-alpha-D-glucosamine = UDP-N-acetyl-3-O-(1-carboxyvinyl)-alpha-D-glucosamine + phosphate. The protein operates within cell wall biogenesis; peptidoglycan biosynthesis. Its function is as follows. Cell wall formation. Adds enolpyruvyl to UDP-N-acetylglucosamine. In Stutzerimonas stutzeri (strain A1501) (Pseudomonas stutzeri), this protein is UDP-N-acetylglucosamine 1-carboxyvinyltransferase.